The sequence spans 739 residues: Transcription activator of gluconeogenesis MCYG_04674 (739 aa).

Over residues 1 to 33 the composition is skewed to polar residues; that stretch reads MSPHQTTGQESDNMAVNGENAQASSQYIQLNSE. A disordered region spans residues 1–62; it reads MSPHQTTGQE…PSRPKRKKAK (62 aa). Residues 40 to 55 show a composition bias toward basic and acidic residues; it reads AAEKKAAAAKAKDPSR. The segment at residues 65-93 is a DNA-binding region (zn(2)-C6 fungal-type); it reads CYACQRGHLTCGDERPCQRCIKRGFQDAC. 5 disordered regions span residues 174 to 223, 264 to 308, 380 to 420, 537 to 574, and 639 to 668; these read GPEN…QFNS, DTPP…GDSG, SRQN…HKNA, NHNVNTGGSSGLLTGSTSRGSYTPRPYSSDQFNSSTTA, and AQNNEVGSGEANELNSSSNGTTSTGRGQRR. Composition is skewed to polar residues over residues 267 to 284 and 397 to 411; these read PSDNGAQRGSIGQNSSGT and PVVSTPQLKQQNLNI. Over residues 547–557 the composition is skewed to low complexity; the sequence is GLLTGSTSRGS. The span at 562–574 shows a compositional bias: polar residues; sequence PYSSDQFNSSTTA. The span at 653-664 shows a compositional bias: low complexity; it reads NSSSNGTTSTGR.

This sequence belongs to the ERT1/acuK family.

It is found in the nucleus. In terms of biological role, transcription factor which regulates nonfermentable carbon utilization. Activator of gluconeogenetic genes. This Arthroderma otae (strain ATCC MYA-4605 / CBS 113480) (Microsporum canis) protein is Transcription activator of gluconeogenesis MCYG_04674.